Reading from the N-terminus, the 772-residue chain is U3 small nucleolar RNA-associated protein 25 homolog (772 aa).

The tract at residues 1-179 (MGKRRNRGRS…SEEFTDVKHE (179 aa)) is disordered. 2 promotes p53/TP53 degradation regions span residues 1 to 201 (MGKR…SQRP) and 589 to 651 (VQLP…KKEE). Ser10 bears the Phosphoserine mark. Over residues 25 to 43 (RDFGEEHPFYDRVSKKEAK) the composition is skewed to basic and acidic residues. Residues Ser52, Ser60, and Ser64 each carry the phosphoserine modification. Residues 54–70 (DSSHSESESESEQEHVS) are compositionally biased toward basic and acidic residues. Over residues 84-124 (EEEEEEEEEEEEEEEEEEEEEEEEEDDSAVGDAEMNEEAGS) the composition is skewed to acidic residues. Positions 127–136 (GSVGEAAVSE) are enriched in low complexity. Residues 169–179 (SSEEFTDVKHE) are compositionally biased toward basic and acidic residues. Residues 652 to 713 (LNFTHICEYT…YELPTYPHFY (62 aa)) form a represses p53/TP53 degradation region.

Belongs to the UTP25 family. As to quaternary structure, interacts with CAPN3; the interaction is required for CAPN3 translocation to the nucleolus. Phosphorylated. Phosphorylation is required to promote p53/TP53 degradation in the nucleolus which promotes cell cycle progression and liver development. In terms of tissue distribution, expressed in all tissues tested: brain, small intestine, large intestine, stomach, liver, spleen, thymus, lung, kidney and testes (at protein level).

Its subcellular location is the nucleus. The protein localises to the nucleolus. In terms of biological role, component of the ribosomal small subunit processome for the biogenesis of ribosomes, functions in pre-ribosomal RNA (pre-rRNA) processing. Essential for embryonic development in part through the regulation of p53 pathway. Controls the expansion growth of digestive organs and liver. Also involved in the sympathetic neuronal development. Mediates, with CAPN3, the proteasome-independent degradation of p53/TP53. In Mus musculus (Mouse), this protein is U3 small nucleolar RNA-associated protein 25 homolog.